Reading from the N-terminus, the 384-residue chain is Carbamoyl phosphate synthase small chain (384 aa).

The CPSase stretch occupies residues 1 to 193 (MTKPATTPAI…DSHPEIPASE (193 aa)). 3 residues coordinate L-glutamine: serine 51, glycine 245, and glycine 247. The 188-residue stretch at 197–384 (HVVAYDYGVK…ISAMAPVVDR (188 aa)) folds into the Glutamine amidotransferase type-1 domain. Cysteine 273 serves as the catalytic Nucleophile. The L-glutamine site is built by leucine 274, glutamine 277, asparagine 315, glycine 317, and phenylalanine 318. Active-site residues include histidine 357 and glutamate 359.

This sequence belongs to the CarA family. Composed of two chains; the small (or glutamine) chain promotes the hydrolysis of glutamine to ammonia, which is used by the large (or ammonia) chain to synthesize carbamoyl phosphate. Tetramer of heterodimers (alpha,beta)4.

The catalysed reaction is hydrogencarbonate + L-glutamine + 2 ATP + H2O = carbamoyl phosphate + L-glutamate + 2 ADP + phosphate + 2 H(+). It catalyses the reaction L-glutamine + H2O = L-glutamate + NH4(+). Its pathway is amino-acid biosynthesis; L-arginine biosynthesis; carbamoyl phosphate from bicarbonate: step 1/1. The protein operates within pyrimidine metabolism; UMP biosynthesis via de novo pathway; (S)-dihydroorotate from bicarbonate: step 1/3. Small subunit of the glutamine-dependent carbamoyl phosphate synthetase (CPSase). CPSase catalyzes the formation of carbamoyl phosphate from the ammonia moiety of glutamine, carbonate, and phosphate donated by ATP, constituting the first step of 2 biosynthetic pathways, one leading to arginine and/or urea and the other to pyrimidine nucleotides. The small subunit (glutamine amidotransferase) binds and cleaves glutamine to supply the large subunit with the substrate ammonia. The protein is Carbamoyl phosphate synthase small chain of Stutzerimonas stutzeri (Pseudomonas stutzeri).